The chain runs to 382 residues: Quinolinate synthase (382 aa).

Iminosuccinate contacts are provided by H63 and S84. C129 is a binding site for [4Fe-4S] cluster. Iminosuccinate is bound by residues 155 to 157 and S172; that span reads YAN. Position 216 (C216) interacts with [4Fe-4S] cluster. Residues 242-244 and T259 each bind iminosuccinate; that span reads HPE. Position 313 (C313) interacts with [4Fe-4S] cluster.

It belongs to the quinolinate synthase family. Type 1 subfamily. [4Fe-4S] cluster is required as a cofactor.

Its subcellular location is the cytoplasm. It catalyses the reaction iminosuccinate + dihydroxyacetone phosphate = quinolinate + phosphate + 2 H2O + H(+). It functions in the pathway cofactor biosynthesis; NAD(+) biosynthesis; quinolinate from iminoaspartate: step 1/1. Catalyzes the condensation of iminoaspartate with dihydroxyacetone phosphate to form quinolinate. The polypeptide is Quinolinate synthase (Ralstonia pickettii (strain 12J)).